A 788-amino-acid polypeptide reads, in one-letter code: Structure-specific endonuclease subunit SLX4 (788 aa).

Disordered regions lie at residues 59 to 86 (LQNE…DNNR), 562 to 584 (KRQP…HDNS), and 599 to 622 (DLVN…PSSP). Residues 562–573 (KRQPVDSENEIR) are compositionally biased toward basic and acidic residues. Over residues 612-622 (DTSVLQVPSSP) the composition is skewed to polar residues.

This sequence belongs to the SLX4 family. In terms of assembly, forms a heterodimer with SLX1. In terms of processing, phosphorylated in response to DNA damage.

It localises to the nucleus. Regulatory subunit of the SLX1-SLX4 structure-specific endonuclease that resolves DNA secondary structures generated during DNA repair and recombination. Has endonuclease activity towards branched DNA substrates, introducing single-strand cuts in duplex DNA close to junctions with ss-DNA. The polypeptide is Structure-specific endonuclease subunit SLX4 (Debaryomyces hansenii (strain ATCC 36239 / CBS 767 / BCRC 21394 / JCM 1990 / NBRC 0083 / IGC 2968) (Yeast)).